The primary structure comprises 571 residues: Proline--tRNA ligase (571 aa).

This sequence belongs to the class-II aminoacyl-tRNA synthetase family. ProS type 1 subfamily. In terms of assembly, homodimer.

It is found in the cytoplasm. The catalysed reaction is tRNA(Pro) + L-proline + ATP = L-prolyl-tRNA(Pro) + AMP + diphosphate. Functionally, catalyzes the attachment of proline to tRNA(Pro) in a two-step reaction: proline is first activated by ATP to form Pro-AMP and then transferred to the acceptor end of tRNA(Pro). As ProRS can inadvertently accommodate and process non-cognate amino acids such as alanine and cysteine, to avoid such errors it has two additional distinct editing activities against alanine. One activity is designated as 'pretransfer' editing and involves the tRNA(Pro)-independent hydrolysis of activated Ala-AMP. The other activity is designated 'posttransfer' editing and involves deacylation of mischarged Ala-tRNA(Pro). The misacylated Cys-tRNA(Pro) is not edited by ProRS. This Ectopseudomonas mendocina (strain ymp) (Pseudomonas mendocina) protein is Proline--tRNA ligase.